The primary structure comprises 356 residues: Phosphate acyltransferase (356 aa).

The protein belongs to the PlsX family. As to quaternary structure, homodimer. Probably interacts with PlsY.

It is found in the cytoplasm. The catalysed reaction is a fatty acyl-[ACP] + phosphate = an acyl phosphate + holo-[ACP]. The protein operates within lipid metabolism; phospholipid metabolism. Catalyzes the reversible formation of acyl-phosphate (acyl-PO(4)) from acyl-[acyl-carrier-protein] (acyl-ACP). This enzyme utilizes acyl-ACP as fatty acyl donor, but not acyl-CoA. This chain is Phosphate acyltransferase, found in Shigella boydii serotype 4 (strain Sb227).